A 550-amino-acid polypeptide reads, in one-letter code: Arginine--tRNA ligase (550 aa).

The short motif at 130-140 (ANPTGPIHLGG) is the 'HIGH' region element.

The protein belongs to the class-I aminoacyl-tRNA synthetase family. As to quaternary structure, monomer.

It is found in the cytoplasm. The catalysed reaction is tRNA(Arg) + L-arginine + ATP = L-arginyl-tRNA(Arg) + AMP + diphosphate. The chain is Arginine--tRNA ligase (argS) from Corynebacterium glutamicum (strain ATCC 13032 / DSM 20300 / JCM 1318 / BCRC 11384 / CCUG 27702 / LMG 3730 / NBRC 12168 / NCIMB 10025 / NRRL B-2784 / 534).